The chain runs to 301 residues: Lipoyl synthase (301 aa).

[4Fe-4S] cluster-binding residues include Cys-50, Cys-55, Cys-61, Cys-76, Cys-80, Cys-83, and Ser-289. The region spanning 62 to 278 is the Radical SAM core domain; the sequence is WNHRTATFLL…RRYALERGFR (217 aa).

This sequence belongs to the radical SAM superfamily. Lipoyl synthase family. It depends on [4Fe-4S] cluster as a cofactor.

It is found in the cytoplasm. The catalysed reaction is [[Fe-S] cluster scaffold protein carrying a second [4Fe-4S](2+) cluster] + N(6)-octanoyl-L-lysyl-[protein] + 2 oxidized [2Fe-2S]-[ferredoxin] + 2 S-adenosyl-L-methionine + 4 H(+) = [[Fe-S] cluster scaffold protein] + N(6)-[(R)-dihydrolipoyl]-L-lysyl-[protein] + 4 Fe(3+) + 2 hydrogen sulfide + 2 5'-deoxyadenosine + 2 L-methionine + 2 reduced [2Fe-2S]-[ferredoxin]. Its pathway is protein modification; protein lipoylation via endogenous pathway; protein N(6)-(lipoyl)lysine from octanoyl-[acyl-carrier-protein]: step 2/2. In terms of biological role, catalyzes the radical-mediated insertion of two sulfur atoms into the C-6 and C-8 positions of the octanoyl moiety bound to the lipoyl domains of lipoate-dependent enzymes, thereby converting the octanoylated domains into lipoylated derivatives. The polypeptide is Lipoyl synthase (Roseiflexus sp. (strain RS-1)).